Consider the following 121-residue polypeptide: Small ribosomal subunit protein uS13 (121 aa).

The segment at 91 to 121 is disordered; that stretch reads HRMSLPVRGQRTRTNARTRRGSRKTVAGRKK. Residues 100 to 121 show a composition bias toward basic residues; it reads QRTRTNARTRRGSRKTVAGRKK.

This sequence belongs to the universal ribosomal protein uS13 family. As to quaternary structure, part of the 30S ribosomal subunit. Forms a loose heterodimer with protein S19. Forms two bridges to the 50S subunit in the 70S ribosome.

Located at the top of the head of the 30S subunit, it contacts several helices of the 16S rRNA. In the 70S ribosome it contacts the 23S rRNA (bridge B1a) and protein L5 of the 50S subunit (bridge B1b), connecting the 2 subunits; these bridges are implicated in subunit movement. Contacts the tRNAs in the A and P-sites. This Prochlorococcus marinus (strain MIT 9515) protein is Small ribosomal subunit protein uS13.